The primary structure comprises 501 residues: Sucrose transport protein SUT2 (501 aa).

Topologically, residues 1-31 (MPRRPSGGGGGAGPAAAAVRKVPLRKLLRAA) are cytoplasmic. The chain crosses the membrane as a helical span at residues 32 to 52 (SVACGVQFGWALQLSLLTPYV). At 53 to 55 (QEL) the chain is on the extracellular side. Residues 56–76 (GIPHAFASLVWLCGPLSGLLV) traverse the membrane as a helical segment. Residues 77–98 (QPLVGHLSDRIAPAASPLGRRR) are Cytoplasmic-facing. A helical membrane pass occupies residues 99-119 (PFIAAGAASIAAAVLTVGFSA). Over 120–135 (DLGRIFGDSITPGSTR) the chain is Extracellular. Residues 136–156 (LGAIIVYLVGFWLLDVGNNAT) form a helical membrane-spanning segment. The Cytoplasmic portion of the chain corresponds to 157-176 (QGPCRAFLADLTENDPRRTR). Residues 177–197 (IANAYFSLFMALGNILGYATG) form a helical membrane-spanning segment. Over 198 to 222 (AYSGWYKIFPFTVTPSCSISCANLK) the chain is Extracellular. Residues 223-243 (SAFLLDIIILVVTTCITVASV) form a helical membrane-spanning segment. Over 244–278 (QEPQSLGSDEADHPSTEQEAFLWELFGSFRYFTLP) the chain is Cytoplasmic. Residues 279 to 299 (VWMVLIVTALTWIGWFPFILF) traverse the membrane as a helical segment. The Extracellular segment spans residues 300–327 (DTDWMGREIYRGSPDDPSITQSYHDGVR). A helical transmembrane segment spans residues 328 to 348 (MGSFGLMLNSVLLGFTSIVLE). Topologically, residues 349 to 356 (KLCRKWGA) are cytoplasmic. Residues 357 to 377 (GLVWGVSNILMALCFVAMLVI) form a helical membrane-spanning segment. Residues 378–394 (TYVAKNMDYPPSGVPPT) are Extracellular-facing. Residues 395–415 (GIVIASLVVFTILGAPLAITY) form a helical membrane-spanning segment. The Cytoplasmic segment spans residues 416–433 (SIPYAMAASRVENLGLGQ). Residues 434 to 454 (GLAMGILNLAIVIPQVIVSLG) form a helical membrane-spanning segment. The Extracellular portion of the chain corresponds to 455–467 (SGPWDQLFGGGNA). The helical transmembrane segment at 468–488 (PAFAVAAAASFIGGLVAILGL) threads the bilayer. The Cytoplasmic portion of the chain corresponds to 489 to 501 (PRARIASRRRGHR).

The protein belongs to the glycoside-pentoside-hexuronide (GPH) cation symporter transporter (TC 2.A.2.4) family. In terms of assembly, homodimer. In terms of tissue distribution, expressed in source leaf blades.

Its subcellular location is the cell membrane. The protein operates within glycan biosynthesis; sucrose metabolism. Functionally, responsible for the transport of sucrose into the cell, with the concomitant uptake of protons (symport system). May also transport other glucosides. This is Sucrose transport protein SUT2 (SUT2) from Oryza sativa subsp. indica (Rice).